Reading from the N-terminus, the 521-residue chain is Probable protein kinase UbiB (521 aa).

One can recognise a Protein kinase domain in the interval 119 to 497; the sequence is QFDETPIASA…QKRTNRLLQT (379 aa). ATP contacts are provided by residues 125–133 and Lys151; that span reads IASASIAQV. The active-site Proton acceptor is the Asp286. The helical transmembrane segment at 496–516 threads the bilayer; the sequence is QTIIYGGIGFVLGLLAMQLLV.

This sequence belongs to the ABC1 family. UbiB subfamily.

It localises to the cell inner membrane. It functions in the pathway cofactor biosynthesis; ubiquinone biosynthesis [regulation]. Is probably a protein kinase regulator of UbiI activity which is involved in aerobic coenzyme Q (ubiquinone) biosynthesis. The chain is Probable protein kinase UbiB from Variovorax paradoxus (strain S110).